The primary structure comprises 418 residues: Glutamyl-tRNA(Gln) amidotransferase subunit D (418 aa).

An Asparaginase/glutaminase domain is found at 81–407; sequence PDVKIISTGG…EEAKEMVKKS (327 aa). Catalysis depends on residues Thr91, Thr166, Asp167, and Lys243.

The protein belongs to the asparaginase 1 family. GatD subfamily. Heterodimer of GatD and GatE.

The enzyme catalyses L-glutamyl-tRNA(Gln) + L-glutamine + ATP + H2O = L-glutaminyl-tRNA(Gln) + L-glutamate + ADP + phosphate + H(+). Functionally, allows the formation of correctly charged Gln-tRNA(Gln) through the transamidation of misacylated Glu-tRNA(Gln) in organisms which lack glutaminyl-tRNA synthetase. The reaction takes place in the presence of glutamine and ATP through an activated gamma-phospho-Glu-tRNA(Gln). The GatDE system is specific for glutamate and does not act on aspartate. This is Glutamyl-tRNA(Gln) amidotransferase subunit D from Archaeoglobus fulgidus (strain ATCC 49558 / DSM 4304 / JCM 9628 / NBRC 100126 / VC-16).